Here is a 177-residue protein sequence, read N- to C-terminus: Ureidoglycolate lyase (177 aa).

It belongs to the ureidoglycolate lyase family. Homodimer. Requires Ni(2+) as cofactor.

It catalyses the reaction (S)-ureidoglycolate = urea + glyoxylate. The protein operates within nitrogen metabolism; (S)-allantoin degradation. Functionally, catalyzes the catabolism of the allantoin degradation intermediate (S)-ureidoglycolate, generating urea and glyoxylate. Involved in the utilization of allantoin as nitrogen source. The polypeptide is Ureidoglycolate lyase (Burkholderia cepacia (Pseudomonas cepacia)).